The chain runs to 265 residues: MKIGIDAGGTLIKIVQEHDNRRYYRTELTTNIQKVIDWLNNEEIETLKLTGGNAGVIADQIHHSPEIFVEFDASSKGLEILLDEQGHQIEHYIFANVGTGTSFHYFDGKDQQRVGGVGTGGGMIQGLGYLLSNITDYKELTNLAQNGDRDAIDLKVKHIYKDTEPPIPGDLTAANFGNVLHHLDNQFTSANKLASAIGVVGEVITTMAITLAREYKTKHVVYIGSSFNNNQLLREVVENYTVLRGFKPYYIENGAFSGALGALYL.

6–13 (DAGGTLIK) lines the ATP pocket. Glu-70 acts as the Proton acceptor in catalysis. Residues Thr-99, 121–125 (GGMIQ), Tyr-137, and Ser-225 each bind ATP.

It belongs to the type II pantothenate kinase family. In terms of assembly, homodimer.

The protein localises to the cytoplasm. It catalyses the reaction (R)-pantothenate + ATP = (R)-4'-phosphopantothenate + ADP + H(+). It functions in the pathway cofactor biosynthesis; coenzyme A biosynthesis; CoA from (R)-pantothenate: step 1/5. Catalyzes the phosphorylation of pantothenate (Pan), the first step in CoA biosynthesis. The chain is Type II pantothenate kinase from Staphylococcus epidermidis (strain ATCC 35984 / DSM 28319 / BCRC 17069 / CCUG 31568 / BM 3577 / RP62A).